Consider the following 388-residue polypeptide: Succinate--CoA ligase [ADP-forming] subunit beta (388 aa).

The region spanning 9 to 244 (KQLFARYGLP…QSQEDPREAQ (236 aa)) is the ATP-grasp domain. Residues Lys46, 53 to 55 (GRG), Glu99, Thr102, and Glu107 each bind ATP. Positions 199 and 213 each coordinate Mg(2+). Residues Asn264 and 321 to 323 (GIV) contribute to the substrate site.

Belongs to the succinate/malate CoA ligase beta subunit family. In terms of assembly, heterotetramer of two alpha and two beta subunits. Requires Mg(2+) as cofactor.

The catalysed reaction is succinate + ATP + CoA = succinyl-CoA + ADP + phosphate. The enzyme catalyses GTP + succinate + CoA = succinyl-CoA + GDP + phosphate. It participates in carbohydrate metabolism; tricarboxylic acid cycle; succinate from succinyl-CoA (ligase route): step 1/1. In terms of biological role, succinyl-CoA synthetase functions in the citric acid cycle (TCA), coupling the hydrolysis of succinyl-CoA to the synthesis of either ATP or GTP and thus represents the only step of substrate-level phosphorylation in the TCA. The beta subunit provides nucleotide specificity of the enzyme and binds the substrate succinate, while the binding sites for coenzyme A and phosphate are found in the alpha subunit. This Klebsiella pneumoniae (strain 342) protein is Succinate--CoA ligase [ADP-forming] subunit beta.